We begin with the raw amino-acid sequence, 379 residues long: Mannitol-1-phosphate 5-dehydrogenase (379 aa).

An NAD(+)-binding site is contributed by 3–14 (AVHFGAGNIGRG).

It belongs to the mannitol dehydrogenase family.

It catalyses the reaction D-mannitol 1-phosphate + NAD(+) = beta-D-fructose 6-phosphate + NADH + H(+). This Anoxybacillus flavithermus (strain DSM 21510 / WK1) protein is Mannitol-1-phosphate 5-dehydrogenase.